A 447-amino-acid polypeptide reads, in one-letter code: Tryptophan 5-hydroxylase 1 (447 aa).

Positions 22–97 constitute an ACT domain; the sequence is TLIFSLENEV…TVLSVDSPDQ (76 aa). Position 61 is a phosphoserine; by PKA (S61). L-tryptophan is bound by residues Y238, R260, and T268. Residues H275, H280, and E320 each coordinate Fe cation. L-tryptophan is bound by residues S339 and I369.

This sequence belongs to the biopterin-dependent aromatic amino acid hydroxylase family. In terms of assembly, homotetramer. Interacts with DNAJC12. The cofactor is Fe(2+). Ubiquitinated, leading to its degradation by the proteasome. Ubiquitinated is triggered by phosphorylation. In terms of processing, phosphorylated; triggering degradation by the proteasome.

The enzyme catalyses (6R)-L-erythro-5,6,7,8-tetrahydrobiopterin + L-tryptophan + O2 = 5-hydroxy-L-tryptophan + (4aS,6R)-4a-hydroxy-L-erythro-5,6,7,8-tetrahydrobiopterin. Its pathway is aromatic compound metabolism; serotonin biosynthesis; serotonin from L-tryptophan: step 1/2. In terms of biological role, oxidizes L-tryptophan to 5-hydroxy-l-tryptophan in the rate-determining step of serotonin biosynthesis. This chain is Tryptophan 5-hydroxylase 1, found in Mus musculus (Mouse).